Consider the following 165-residue polypeptide: Putative protein FAM86C2P (165 aa).

It belongs to the class I-like SAM-binding methyltransferase superfamily. EEF2KMT family.

The protein is Putative protein FAM86C2P (FAM86C2P) of Homo sapiens (Human).